The primary structure comprises 648 residues: Leucine aminopeptidase 2 (648 aa).

A peptide is bound by residues 143 to 145 and 269 to 274; these read QCQ and PYGGME. His298 contributes to the Zn(2+) binding site. The active-site Proton acceptor is the Glu299. Positions 302 and 321 each coordinate Zn(2+). The active-site Proton donor is Tyr408.

This sequence belongs to the peptidase M1 family. The cofactor is Zn(2+).

The protein resides in the cytoplasm. It localises to the nucleus. It carries out the reaction an epoxide + H2O = an ethanediol. Aminopeptidase that preferentially cleaves di- and tripeptides. Also has low epoxide hydrolase activity (in vitro). Can hydrolyze the epoxide leukotriene LTA(4) but it forms preferentially 5,6-dihydroxy-7,9,11,14-eicosatetraenoic acid rather than the cytokine leukotriene B(4) as the product compared to the homologous mammalian enzyme (in vitro). This Lodderomyces elongisporus (strain ATCC 11503 / CBS 2605 / JCM 1781 / NBRC 1676 / NRRL YB-4239) (Yeast) protein is Leucine aminopeptidase 2.